An 87-amino-acid chain; its full sequence is Putative defensin-like protein 231 (87 aa).

An N-terminal signal peptide occupies residues 1 to 26; that stretch reads MKFATCFLVSYVLVFLVLSVCKEVEA. 4 cysteine pairs are disulfide-bonded: cysteine 30/cysteine 85, cysteine 40/cysteine 66, cysteine 48/cysteine 79, and cysteine 64/cysteine 81.

The protein belongs to the DEFL family.

The protein resides in the secreted. In Arabidopsis thaliana (Mouse-ear cress), this protein is Putative defensin-like protein 231 (SCRL25).